A 209-amino-acid chain; its full sequence is MAELSTLARPYAKAAFDYAHENSVIGEWEDFLFIASSVVGDSAFVQMLENPAITAEQKADMLVSIYDEQVTSTEETPLKSLLLSTQSHTDEAQSNQALPAATPQIKNFVHQLAEQERLSLIPQVYEQFRLHRAQALKQVNAYVTSAYPLSETQRVMIQKRLEESLKASVIIHEDVDPSLLAGATVKIGDKLVDDSVRGKLKQLKTQLTA.

This sequence belongs to the ATPase delta chain family. F-type ATPases have 2 components, F(1) - the catalytic core - and F(0) - the membrane proton channel. F(1) has five subunits: alpha(3), beta(3), gamma(1), delta(1), epsilon(1). F(0) has three main subunits: a(1), b(2) and c(10-14). The alpha and beta chains form an alternating ring which encloses part of the gamma chain. F(1) is attached to F(0) by a central stalk formed by the gamma and epsilon chains, while a peripheral stalk is formed by the delta and b chains.

It is found in the cell inner membrane. In terms of biological role, f(1)F(0) ATP synthase produces ATP from ADP in the presence of a proton or sodium gradient. F-type ATPases consist of two structural domains, F(1) containing the extramembraneous catalytic core and F(0) containing the membrane proton channel, linked together by a central stalk and a peripheral stalk. During catalysis, ATP synthesis in the catalytic domain of F(1) is coupled via a rotary mechanism of the central stalk subunits to proton translocation. Functionally, this protein is part of the stalk that links CF(0) to CF(1). It either transmits conformational changes from CF(0) to CF(1) or is implicated in proton conduction. The polypeptide is ATP synthase subunit delta (Psychrobacter sp. (strain PRwf-1)).